Here is a 115-residue protein sequence, read N- to C-terminus: Ribonuclease P protein component (115 aa).

This sequence belongs to the RnpA family. Consists of a catalytic RNA component (M1 or rnpB) and a protein subunit.

It carries out the reaction Endonucleolytic cleavage of RNA, removing 5'-extranucleotides from tRNA precursor.. In terms of biological role, RNaseP catalyzes the removal of the 5'-leader sequence from pre-tRNA to produce the mature 5'-terminus. It can also cleave other RNA substrates such as 4.5S RNA. The protein component plays an auxiliary but essential role in vivo by binding to the 5'-leader sequence and broadening the substrate specificity of the ribozyme. This chain is Ribonuclease P protein component, found in Phytoplasma australiense.